A 541-amino-acid polypeptide reads, in one-letter code: MVIIMDEKAKLMRCIIERILDEYNKGKTLDKKRIEQIKAECLRIHRIGIGHPSNSEILQYATEEEKKILIPILRKKPVRTISGVAVVAVMTSPEKCPHGKCIFCPGGVGSVFGDVPQSYTGREPATMRGLMFNFDPYLQTKARIEQLEKVGHPTNKIELIIMGGTFPARDIEYQDWFIKRCLDAMNGVDASSLEEAQKINETAEHRCVALCIETRPDYCGEKEINQMLKLGATRVELGVQTIYNEILEFCKRGHTVEDTIKATQLLKDSGLKVSYHLMPGMPGSDMEMDKKMFKEIFENPDFKPDMVKIYPCLVIEGTELYEMWKRGEYKPYREEEAIEIISYAKSIMPKWVRTSRIQRDIPATVIVDGVKKSNLGELVYKYMEKHGIKCKCIRCREVGHVMYKKGIMPDIEHIKLCREEYEASGGTEIFLSYEDVKNDILIAFLRLREPYKPFRKEIDDNTMLVRQLHVCGQEKPLTKDLKEITWQHKGYGRKLLEEAERIAKEEFGKKKILVTSGIGVREYYRKLGYERVGAYMGKYLE.

Residues 76 to 336 (KPVRTISGVA…GEYKPYREEE (261 aa)) are radical S-adenosyl-L-methionine (rSAM). In terms of domain architecture, Radical SAM core spans 79–350 (RTISGVAVVA…ISYAKSIMPK (272 aa)). Residues cysteine 96, cysteine 101, and cysteine 104 each contribute to the [4Fe-4S] cluster site. Acetyl-CoA is bound by residues lysine 156, 467-470 (QLHV), 491-493 (YGR), and tyrosine 524. Positions 401 to 541 (VMYKKGIMPD…VGAYMGKYLE (141 aa)) constitute an N-acetyltransferase domain.

This sequence belongs to the ELP3 family. Requires [4Fe-4S] cluster as cofactor.

It carries out the reaction uridine(34) in tRNA + acetyl-CoA + S-adenosyl-L-methionine + H2O = 5-(carboxymethyl)uridine(34) in tRNA + 5'-deoxyadenosine + L-methionine + CoA + 2 H(+). It functions in the pathway tRNA modification. Its function is as follows. tRNA uridine(34) acetyltransferase, which mediates formation of carboxymethyluridine in the wobble base at position 34 in tRNAs. The proposed mechanism is the following: (i) recruits S-adenosyl-L-methionine and cleaves it to generate a 5'-deoxyadenosine radical (5'-dA) in the radical S-adenosyl-L-methionine (rSAM) region, (ii) hydrolyzes acetyl-CoA in the N-acetyltransferase domain and (iii) an acetyl radical is formed by the products of the two domains and (iv) is transferred onto the C5 position of uridine(34) in the bound tRNA molecule. Does not show protein lysine acetyltransferase activity. This is tRNA uridine(34) acetyltransferase from Methanocaldococcus jannaschii (strain ATCC 43067 / DSM 2661 / JAL-1 / JCM 10045 / NBRC 100440) (Methanococcus jannaschii).